The primary structure comprises 156 residues: SCP2 sterol-binding domain-containing protein 1 (156 aa).

An SCP2 domain is found at 44–156; the sequence is NFSVFEDISQ…ERIFREWAKI (113 aa).

This Mus musculus (Mouse) protein is SCP2 sterol-binding domain-containing protein 1 (Scp2d1).